The following is a 729-amino-acid chain: Fatty acid oxidation complex subunit alpha (729 aa).

The segment at 1 to 189 (MLYKGDTLYL…KIGLVDGVVK (189 aa)) is enoyl-CoA hydratase/isomerase. Asp-296 provides a ligand contact to substrate. The tract at residues 311-729 (ETPKQAAVLG…ARPVGDLKTA (419 aa)) is 3-hydroxyacyl-CoA dehydrogenase. NAD(+) contacts are provided by residues Met-324, Asp-343, 400 to 402 (VVE), Lys-407, and Ser-429. Catalysis depends on His-450, which acts as the For 3-hydroxyacyl-CoA dehydrogenase activity. Asn-453 contacts NAD(+). 2 residues coordinate substrate: Asn-500 and Tyr-660. A disordered region spans residues 708-729 (RHNEPYYPPVEPARPVGDLKTA).

In the N-terminal section; belongs to the enoyl-CoA hydratase/isomerase family. This sequence in the C-terminal section; belongs to the 3-hydroxyacyl-CoA dehydrogenase family. As to quaternary structure, heterotetramer of two alpha chains (FadB) and two beta chains (FadA).

It carries out the reaction a (3S)-3-hydroxyacyl-CoA + NAD(+) = a 3-oxoacyl-CoA + NADH + H(+). It catalyses the reaction a (3S)-3-hydroxyacyl-CoA = a (2E)-enoyl-CoA + H2O. The catalysed reaction is a 4-saturated-(3S)-3-hydroxyacyl-CoA = a (3E)-enoyl-CoA + H2O. The enzyme catalyses (3S)-3-hydroxybutanoyl-CoA = (3R)-3-hydroxybutanoyl-CoA. It carries out the reaction a (3Z)-enoyl-CoA = a 4-saturated (2E)-enoyl-CoA. It catalyses the reaction a (3E)-enoyl-CoA = a 4-saturated (2E)-enoyl-CoA. It functions in the pathway lipid metabolism; fatty acid beta-oxidation. In terms of biological role, involved in the aerobic and anaerobic degradation of long-chain fatty acids via beta-oxidation cycle. Catalyzes the formation of 3-oxoacyl-CoA from enoyl-CoA via L-3-hydroxyacyl-CoA. It can also use D-3-hydroxyacyl-CoA and cis-3-enoyl-CoA as substrate. This Citrobacter koseri (strain ATCC BAA-895 / CDC 4225-83 / SGSC4696) protein is Fatty acid oxidation complex subunit alpha.